The chain runs to 361 residues: Chorismate synthase (361 aa).

NADP(+) contacts are provided by arginine 48 and arginine 54. FMN-binding positions include 125-127, 238-239, glycine 278, 293-297, and arginine 319; these read RSS, NA, and KPTSS.

Belongs to the chorismate synthase family. As to quaternary structure, homotetramer. FMNH2 serves as cofactor.

The enzyme catalyses 5-O-(1-carboxyvinyl)-3-phosphoshikimate = chorismate + phosphate. Its pathway is metabolic intermediate biosynthesis; chorismate biosynthesis; chorismate from D-erythrose 4-phosphate and phosphoenolpyruvate: step 7/7. Its function is as follows. Catalyzes the anti-1,4-elimination of the C-3 phosphate and the C-6 proR hydrogen from 5-enolpyruvylshikimate-3-phosphate (EPSP) to yield chorismate, which is the branch point compound that serves as the starting substrate for the three terminal pathways of aromatic amino acid biosynthesis. This reaction introduces a second double bond into the aromatic ring system. This Escherichia coli O139:H28 (strain E24377A / ETEC) protein is Chorismate synthase.